We begin with the raw amino-acid sequence, 404 residues long: Cysteine desulfurase IscS (404 aa).

Pyridoxal 5'-phosphate contacts are provided by residues 75 to 76 (AT), Asn155, Gln183, and 203 to 205 (SGH). Lys206 is subject to N6-(pyridoxal phosphate)lysine. Thr243 is a pyridoxal 5'-phosphate binding site. The Cysteine persulfide intermediate role is filled by Cys328. Residue Cys328 coordinates [2Fe-2S] cluster.

Belongs to the class-V pyridoxal-phosphate-dependent aminotransferase family. NifS/IscS subfamily. As to quaternary structure, homodimer. Forms a heterotetramer with IscU, interacts with other sulfur acceptors. Pyridoxal 5'-phosphate is required as a cofactor.

The protein resides in the cytoplasm. It catalyses the reaction (sulfur carrier)-H + L-cysteine = (sulfur carrier)-SH + L-alanine. Its pathway is cofactor biosynthesis; iron-sulfur cluster biosynthesis. Its function is as follows. Master enzyme that delivers sulfur to a number of partners involved in Fe-S cluster assembly, tRNA modification or cofactor biosynthesis. Catalyzes the removal of elemental sulfur atoms from cysteine to produce alanine. Functions as a sulfur delivery protein for Fe-S cluster synthesis onto IscU, an Fe-S scaffold assembly protein, as well as other S acceptor proteins. This Shewanella sp. (strain MR-4) protein is Cysteine desulfurase IscS.